We begin with the raw amino-acid sequence, 263 residues long: Sulfur carrier protein FdhD (263 aa).

Residue C107 is the Cysteine persulfide intermediate of the active site.

The protein belongs to the FdhD family.

The protein resides in the cytoplasm. Its function is as follows. Required for formate dehydrogenase (FDH) activity. Acts as a sulfur carrier protein that transfers sulfur from IscS to the molybdenum cofactor prior to its insertion into FDH. This chain is Sulfur carrier protein FdhD, found in Bacillus licheniformis (strain ATCC 14580 / DSM 13 / JCM 2505 / CCUG 7422 / NBRC 12200 / NCIMB 9375 / NCTC 10341 / NRRL NRS-1264 / Gibson 46).